The sequence spans 131 residues: MTTKRKPYVRPMTSTWWKKLPFYRFYMLREGTAVPAVWFSIELIFGLFALKNGPESWAGFVDFLQNPVIVIINLITLAAALLHTKTWFELAPKAANIIVKDEKMGPEPIIKSLWAVTVVATIVILFVALYW.

Transmembrane regions (helical) follow at residues 30-50, 63-83, and 109-129; these read EGTA…LFAL, FLQN…ALLH, and IIKS…FVAL.

The protein belongs to the FrdC family. As to quaternary structure, part of an enzyme complex containing four subunits: a flavoprotein (FrdA), an iron-sulfur protein (FrdB), and two hydrophobic anchor proteins (FrdC and FrdD).

It is found in the cell inner membrane. In terms of biological role, two distinct, membrane-bound, FAD-containing enzymes are responsible for the catalysis of fumarate and succinate interconversion; fumarate reductase is used in anaerobic growth, and succinate dehydrogenase is used in aerobic growth. Anchors the catalytic components of the fumarate reductase complex to the cell inner membrane, binds quinones. The polypeptide is Fumarate reductase subunit C (Escherichia coli O17:K52:H18 (strain UMN026 / ExPEC)).